Consider the following 128-residue polypeptide: UPF0325 protein KPN78578_01770 (128 aa).

Belongs to the UPF0325 family.

This chain is UPF0325 protein KPN78578_01770, found in Klebsiella pneumoniae subsp. pneumoniae (strain ATCC 700721 / MGH 78578).